Here is a 2181-residue protein sequence, read N- to C-terminus: Non-reducing polyketide synthase subA (2181 aa).

The N-terminal acylcarrier protein transacylase domain (SAT) stretch occupies residues 74 to 180 (QWVKGNSTQP…LALCCGAYID (107 aa)). The region spanning 347–779 (QAQLLVLGPV…GTNAAMLVCQ (433 aa)) is the Ketosynthase family 3 (KS3) domain. Catalysis depends on for beta-ketoacyl synthase activity residues C525, H661, and H702. Positions 891 to 1193 (VLAGQTGRRV…SFYPAALGEP (303 aa)) are malonyl-CoA:ACP transacylase (MAT) domain. S977 serves as the catalytic For acyl/malonyl transferase activity. Residues 1269-1401 (VSLIGKTQNA…GVITLQEVYS (133 aa)) are N-terminal hotdog fold. The region spanning 1269-1579 (VSLIGKTQNA…FQKIAISSLK (311 aa)) is the PKS/mFAS DH domain. Residues 1276–1573 (QNAGVQTVEY…TILGAKFQKI (298 aa)) are product template (PT) domain. Residues 1425 to 1579 (SASVVQGDFI…FQKIAISSLK (155 aa)) form a C-terminal hotdog fold region. The segment at 1652-1673 (ISGSSRSTSSSPPSLESRSQAM) is disordered. Residues 1653 to 1670 (SGSSRSTSSSPPSLESRS) are compositionally biased toward low complexity. The Carrier domain maps to 1677-1753 (EITEGAGSAL…TLFHTIFPQQ (77 aa)). At S1713 the chain carries O-(pantetheine 4'-phosphoryl)serine. The tract at residues 1982–2164 (EFMNCLFSYN…QSGFGHVDWT (183 aa)) is methyltransferase (CMeT) domain.

The protein operates within secondary metabolite biosynthesis; terpenoid biosynthesis. In terms of biological role, non-reducing polyketide synthase; part of the gene cluster that mediates the biosynthesis of the immunosuppressants subglutinols, meroterpenoids consisting of an alpha-pyrone (4-hydroxy-5,6-dimethyl-2-pyrone) moiety attached to a decalin core fused to a five-membered cyclic ether carrying a prenylside chain. The first step of the pathway is the synthesis of the alpha-pyrone moiety by the polyketide synthase subA via condensation of one acetyl-CoA starter unit with 3 malonyl-CoA units and 2 methylations. The alpha-pyrone is then combined with geranylgeranyl pyrophosphate (GGPP) formed by the GGPP synthase subD through the action of the prenyltransferase subC to yield a linear alpha-pyrone diterpenoid. Subsequent steps in the subglutinol biosynthetic pathway involve the decalin core formation, which is thought to be initiated by the epoxidation of the C10-C11 olefin by the FAD-dependent oxidoreductase subE. The following cyclization cascade would be catalyzed by the terpene cyclase subB. Lastly, the FAD-dependent dehydrogenase subF probably catalyzes the five-membered cyclic ether formation to complete the formation of subglutinol A. Subsequent redox reactions appear to give rise to subglutinol C and D, however, it remains unclear which enzymes are responsible for these transformations. SubD may have secondary function in the conversion of the identified subglutinols to subglutinol analog 45, which seems to be the major product of the cluster. In Metarhizium robertsii (strain ARSEF 23 / ATCC MYA-3075) (Metarhizium anisopliae (strain ARSEF 23)), this protein is Non-reducing polyketide synthase subA.